A 217-amino-acid polypeptide reads, in one-letter code: Large ribosomal subunit protein uL4 (217 aa).

The protein belongs to the universal ribosomal protein uL4 family. As to quaternary structure, part of the 50S ribosomal subunit.

Its function is as follows. One of the primary rRNA binding proteins, this protein initially binds near the 5'-end of the 23S rRNA. It is important during the early stages of 50S assembly. It makes multiple contacts with different domains of the 23S rRNA in the assembled 50S subunit and ribosome. Forms part of the polypeptide exit tunnel. This is Large ribosomal subunit protein uL4 from Koribacter versatilis (strain Ellin345).